Reading from the N-terminus, the 477-residue chain is uncharacterized protein (477 aa).

A helical transmembrane segment spans residues 107 to 129; it reads VNFWSLSMACASVLALLGLVYLI.

The protein resides in the membrane. This is an uncharacterized protein from Treponema pallidum (strain Nichols).